The following is a 217-amino-acid chain: MPRFQLSNSTSVPNHNYEWSYEYYDDEEPVSFEGLKAHRYSIVIGFWVGLAVFVIFMFFVLTLLTKTGAPHPEAAEPYEKRMRLTSCADGLGRQRETDGRTGLSRPLLEESRSLFHCYINEEEREGGRAATDAGALTHGRSGIGNSRGQVEEVGLVVQNMVLESRAEREAALLAHFNIPNFVNSELNSALGDEDLLLGDPPIIMEEARPRCTHHIID.

Asn8 carries N-linked (GlcNAc...) asparagine glycosylation. A helical membrane pass occupies residues 42 to 62 (IVIGFWVGLAVFVIFMFFVLT).

Belongs to the MRAP family. Interacts with mc4r.

Its subcellular location is the cell membrane. It is found in the endoplasmic reticulum membrane. Its function is as follows. Inhibitor of melanocortin receptor 4 (mc4r), a receptor involved in energy homeostasis. Plays a role during larval development in the control of energy homeostasis and body weight regulation by decreasing ligand-sensitivity of mc4r and mc4r-mediated generation of cAMP, leading to stimulate growth during larval development. Acts by stabilizing an inactive conformation of mc4r during embryonic development, when all the energy consumed is obtained from the yolk sac, possibly to speed the rapid maturation to the mobile free-feeding juvenile stage reached at 5 dpf. In Danio rerio (Zebrafish), this protein is Melanocortin-2 receptor accessory protein 2A (mrap2a).